The sequence spans 628 residues: Phosphomethylpyrimidine synthase (628 aa).

Residues asparagine 225, methionine 254, tyrosine 283, histidine 319, 339–341, 380–383, and glutamate 419 contribute to the substrate site; these read SRG and DGLR. A Zn(2+)-binding site is contributed by histidine 423. Tyrosine 446 contributes to the substrate binding site. Position 487 (histidine 487) interacts with Zn(2+). The [4Fe-4S] cluster site is built by cysteine 567, cysteine 570, and cysteine 575.

The protein belongs to the ThiC family. Homodimer. It depends on [4Fe-4S] cluster as a cofactor.

The enzyme catalyses 5-amino-1-(5-phospho-beta-D-ribosyl)imidazole + S-adenosyl-L-methionine = 4-amino-2-methyl-5-(phosphooxymethyl)pyrimidine + CO + 5'-deoxyadenosine + formate + L-methionine + 3 H(+). It participates in cofactor biosynthesis; thiamine diphosphate biosynthesis. In terms of biological role, catalyzes the synthesis of the hydroxymethylpyrimidine phosphate (HMP-P) moiety of thiamine from aminoimidazole ribotide (AIR) in a radical S-adenosyl-L-methionine (SAM)-dependent reaction. This Leptothrix cholodnii (strain ATCC 51168 / LMG 8142 / SP-6) (Leptothrix discophora (strain SP-6)) protein is Phosphomethylpyrimidine synthase.